An 82-amino-acid polypeptide reads, in one-letter code: Histidine-rich protein (82 aa).

This chain is Histidine-rich protein, found in Plasmodium falciparum (isolate fcm17 / Senegal).